A 130-amino-acid chain; its full sequence is Transcription antitermination protein NusB (130 aa).

The protein belongs to the NusB family.

In terms of biological role, involved in transcription antitermination. Required for transcription of ribosomal RNA (rRNA) genes. Binds specifically to the boxA antiterminator sequence of the ribosomal RNA (rrn) operons. The chain is Transcription antitermination protein NusB from Bacillus mycoides (strain KBAB4) (Bacillus weihenstephanensis).